The chain runs to 88 residues: Large ribosomal subunit protein bL31B (88 aa).

Belongs to the bacterial ribosomal protein bL31 family. Type B subfamily. In terms of assembly, part of the 50S ribosomal subunit.

The protein is Large ribosomal subunit protein bL31B of Glaesserella parasuis serovar 5 (strain SH0165) (Haemophilus parasuis).